The following is a 362-amino-acid chain: MQVTAPRTVLLLLSAALALTETWAGSHSMKYFYTAVSRPGRGEPRFISVGYVDDTQFVWFDSDAASPREEPRAPWIEQEGPEYWDRETQISKTNAQTYRESLRNLRGYYNQSEAGSHIIQRMYGCDMGPDGRLLRGYEQYAYDGKDYIALNEDLSSWTAADTAAQITQRKWEAARWAEQLRAYLEGTCVEWLRRYLENGKETLQRADPPKTHVTHHPISDHEATLRCWALGFYPAEITLTWQRDGEDQTQDTELVETRPAGDRTFQKWAAVVVPSGEEQRYTCHVQHEGLPKPLTLRWEPSSQSTIPIVGIVAGLAVLAVVVIGAVVAAVMCRRKSSGGKGGSYSQAASSDSAQGSDVSLTA.

The N-terminal stretch at Met-1–Ala-24 is a signal peptide. Positions Gly-25–Ala-114 are alpha-1. Residues Gly-25–Ile-308 are Extracellular-facing. A glycan (N-linked (GlcNAc...) asparagine) is linked at Asn-110. An alpha-2 region spans residues Gly-115–Ala-206. 2 cysteine pairs are disulfide-bonded: Cys-125–Cys-188 and Cys-227–Cys-283. The alpha-3 stretch occupies residues Asp-207–Trp-298. An Ig-like C1-type domain is found at Pro-209–Thr-295. The interval Glu-299–Ile-308 is connecting peptide. The chain crosses the membrane as a helical span at residues Val-309–Cys-332. Residues Arg-333–Ala-362 lie on the Cytoplasmic side of the membrane. Residues Ser-336 to Ala-362 form a disordered region. The segment covering Ser-343–Ala-362 has biased composition (low complexity).

It belongs to the MHC class I family. Heterodimer of an alpha chain and a beta chain (beta-2-microglobulin).

It localises to the membrane. In terms of biological role, involved in the presentation of foreign antigens to the immune system. The protein is Patr class I histocompatibility antigen, B-2 alpha chain of Pan troglodytes (Chimpanzee).